The following is a 469-amino-acid chain: 3-isopropylmalate dehydratase large subunit (469 aa).

Residues cysteine 349, cysteine 410, and cysteine 413 each coordinate [4Fe-4S] cluster.

This sequence belongs to the aconitase/IPM isomerase family. LeuC type 1 subfamily. As to quaternary structure, heterodimer of LeuC and LeuD. Requires [4Fe-4S] cluster as cofactor.

It catalyses the reaction (2R,3S)-3-isopropylmalate = (2S)-2-isopropylmalate. It functions in the pathway amino-acid biosynthesis; L-leucine biosynthesis; L-leucine from 3-methyl-2-oxobutanoate: step 2/4. Its function is as follows. Catalyzes the isomerization between 2-isopropylmalate and 3-isopropylmalate, via the formation of 2-isopropylmaleate. This is 3-isopropylmalate dehydratase large subunit from Aromatoleum aromaticum (strain DSM 19018 / LMG 30748 / EbN1) (Azoarcus sp. (strain EbN1)).